Reading from the N-terminus, the 555-residue chain is Solute carrier family 22 member 2 (555 aa).

Topologically, residues 1–21 (MPTTVDDVLEHGGEFHFFQKQ) are cytoplasmic. The helical transmembrane segment at 22 to 42 (MFFLLALLSATFTPIYVGIVF) threads the bilayer. Over 43–150 (LGFTPDHRCR…LVCANSWMLD (108 aa)) the chain is Extracellular. The N-linked (GlcNAc...) asparagine glycan is linked to Asn72. Residues 151 to 171 (LFQASVNVGFFFGSVSIGYIA) form a helical membrane-spanning segment. The Cytoplasmic portion of the chain corresponds to 172-177 (DRFGRK). Residues 178–198 (LCLLTTVLINAAAGVLMAISP) traverse the membrane as a helical segment. Topologically, residues 199-210 (TYTWMLIFRLIQ) are extracellular. The helical transmembrane segment at 211–231 (GLVSKAGWLIGYILITEFVGR) threads the bilayer. Residues 232–238 (RYRRTVG) are Cytoplasmic-facing. A helical membrane pass occupies residues 239–259 (IFYQVAYTVGLLVLAGVAYAL). Residues 260–263 (PHWR) are Extracellular-facing. Residues 264–284 (WLQFTVTLPNFFFLLYYWCIP) traverse the membrane as a helical segment. The Proline-rich sequence signature appears at 284–288 (PESPR). At 285-348 (ESPRWLISQN…VRTPQIRKHT (64 aa)) the chain is on the cytoplasmic side. The helical transmembrane segment at 349 to 369 (MILMYNWFTSSVLYQGLIMHM) threads the bilayer. Residues 370–375 (GLAGDN) lie on the Extracellular side of the membrane. Residues 376 to 396 (IYLDFFYSALVEFPAAFMIIV) form a helical membrane-spanning segment. The Cytoplasmic segment spans residues 397–404 (TIDRIGRR). The chain crosses the membrane as a helical span at residues 405–425 (YPWAASNMVAGAACLASVFIP). Topologically, residues 426 to 432 (GDLQWLK) are extracellular. The helical transmembrane segment at 433–453 (IIISCLGRMGITMAYEIVRLV) threads the bilayer. Residues 454 to 464 (NAELYPTFIRN) lie on the Cytoplasmic side of the membrane. A helical transmembrane segment spans residues 465–485 (LGVHICSSMCDIGGIITPFLV). At 486–494 (YRLTNIWLE) the chain is on the extracellular side. A helical transmembrane segment spans residues 495–515 (LPLMVFGVLGLVAGGLVLLLP). At 516 to 555 (ETKGKALPETIEEAENMQRPRKNKEKMIYLQVQKLDIPLN) the chain is on the cytoplasmic side.

This sequence belongs to the major facilitator (TC 2.A.1) superfamily. Organic cation transporter (TC 2.A.1.19) family. Post-translationally, tyrosine phosphorylated.

The protein localises to the basolateral cell membrane. The protein resides in the basal cell membrane. Its subcellular location is the apical cell membrane. The catalysed reaction is (R)-noradrenaline(out) = (R)-noradrenaline(in). It catalyses the reaction (R)-adrenaline(out) = (R)-adrenaline(in). It carries out the reaction serotonin(out) = serotonin(in). The enzyme catalyses dopamine(out) = dopamine(in). The catalysed reaction is histamine(out) = histamine(in). It catalyses the reaction thiamine(in) = thiamine(out). It carries out the reaction creatinine(in) = creatinine(out). The enzyme catalyses 1-methylnicotinamide(out) = 1-methylnicotinamide(in). The catalysed reaction is guanidine(out) = guanidine(in). It catalyses the reaction choline(out) = choline(in). It carries out the reaction agmatine(out) = agmatine(in). The enzyme catalyses putrescine(out) = putrescine(in). The catalysed reaction is spermidine(in) = spermidine(out). It catalyses the reaction tyramine(in) = tyramine(out). It carries out the reaction L-histidyl-L-proline diketopiperazine(in) = L-histidyl-L-proline diketopiperazine(out). The enzyme catalyses (R)-salsolinol(in) = (R)-salsolinol(out). The catalysed reaction is N-methyl-(R)-salsolinol(in) = N-methyl-(R)-salsolinol(out). It catalyses the reaction acetylcholine(in) = acetylcholine(out). It carries out the reaction prostaglandin F2alpha(out) = prostaglandin F2alpha(in). The enzyme catalyses prostaglandin E2(out) = prostaglandin E2(in). Its activity is regulated as follows. Tyrosine phosphorylation of the transporter leads to activation of the transport activity. Inhibited by cGMP, most likely through a cGMP-binding protein that interacts with OCT2. Functionally, electrogenic voltage-dependent transporter that mediates the transport of a variety of organic cations such as endogenous bioactive amines, cationic drugs and xenobiotics. Functions as a Na(+)-independent, bidirectional uniporter. Cation cellular uptake or release is driven by the electrochemical potential, i.e. membrane potential and concentration gradient. However, may also engage electroneutral cation exchange when saturating concentrations of cation substrates are reached. Predominantly expressed at the basolateral membrane of hepatocytes and proximal tubules and involved in the uptake and disposition of cationic compounds by hepatic and renal clearance from the blood flow. Implicated in monoamine neurotransmitters uptake such as histamine, dopamine, adrenaline/epinephrine, noradrenaline/norepinephrine, serotonin and tyramine, thereby supporting a physiological role in the central nervous system by regulating interstitial concentrations of neurotransmitters. Also capable of transporting dopaminergic neuromodulators cyclo(his-pro), salsolinol and N-methyl-salsolinol, thereby involved in the maintenance of dopaminergic cell integrity in the central nervous system. Mediates the bidirectional transport of acetylcholine (ACh) at the apical membrane of ciliated cell in airway epithelium, thereby playing a role in luminal release of ACh from bronchial epithelium. Also transports guanidine and endogenous monoamines such as vitamin B1/thiamine, creatinine and N-1-methylnicotinamide (NMN). Mediates the uptake and efflux of quaternary ammonium compound choline. Mediates the bidirectional transport of polyamine agmatine and the uptake of polyamines putrescine and spermidine. Able to transport non-amine endogenous compounds such as prostaglandin E2 (PGE2) and prostaglandin F2-alpha (PGF2-alpha). Also involved in the uptake of xenobiotic 4-(4-(dimethylamino)styryl)-N-methylpyridinium (ASP). May contribute to regulate the transport of organic compounds in testis across the blood-testis-barrier. The protein is Solute carrier family 22 member 2 (SLC22A2) of Pongo abelii (Sumatran orangutan).